The primary structure comprises 468 residues: E3 ubiquitin-protein ligase RGLG2 (468 aa).

The interval 1-89 (MGTGNSKENW…PSQSYGSDNK (89 aa)) is disordered. Gly2 carries N-myristoyl glycine lipidation. The segment covering 12–45 (QSSFRSTSASSASPSSSSWASQQSYPQYGAESYN) has biased composition (low complexity). Pro residues predominate over residues 46–65 (YPPPPSYAQPPEYTQPPPPL). Residues 66-84 (YSTQPYSAPSYSAPPSQSY) show a composition bias toward low complexity. The region spanning 122 to 342 (NLIVGIDFTK…KETEFALSAL (221 aa)) is the VWFA domain. The segment at 369–416 (FPLPPPMRGGSSSYNSPKPSRLPSFKPSVPPHPTEGYHVRSSPVPPPT) is disordered. Residues 425–458 (CPICLSNPKDMAFGCGHQTCCECGPDLQMCPICR) form an RING-type zinc finger.

As to quaternary structure, interacts with the heterodimer UBC35/UEV1B, UBC35 alone, PIN1, but not with UCB2, UCB9, UEV1B or UEV1C alone. Interacts with ERF053. N-myristoylated. As to expression, ubiquitously expressed.

It localises to the cell membrane. The protein resides in the nucleus. It carries out the reaction S-ubiquitinyl-[E2 ubiquitin-conjugating enzyme]-L-cysteine + [acceptor protein]-L-lysine = [E2 ubiquitin-conjugating enzyme]-L-cysteine + N(6)-ubiquitinyl-[acceptor protein]-L-lysine.. E3 ubiquitin-protein ligase that mediates the formation of 'Lys-63'-linked ubiquitin chains. Regulates apical dominance by acting on the auxin transport proteins abundance. Mediates ubiquitination and subsequent proteasomal degradation of ERF053 in response to drought stress. Acts as a negative regulator of drought stress response. In Arabidopsis thaliana (Mouse-ear cress), this protein is E3 ubiquitin-protein ligase RGLG2.